A 166-amino-acid polypeptide reads, in one-letter code: Probable calcium-binding protein CML17 (166 aa).

EF-hand domains follow at residues 12–47 (EQIN…LGVK), 48–83 (PSPD…ELLS), 91–126 (YTEE…LGHA), and 127–162 (LTVA…AAFD). Residues D25, N27, D29, S31, and E36 each contribute to the Ca(2+) site. The Ca(2+) site is built by D104, D106, N108, E115, D140, D142, D144, R146, and E151.

In terms of biological role, potential calcium sensor. The protein is Probable calcium-binding protein CML17 (CML17) of Arabidopsis thaliana (Mouse-ear cress).